Reading from the N-terminus, the 602-residue chain is DNA mismatch repair protein MutL (602 aa).

Belongs to the DNA mismatch repair MutL/HexB family.

Its function is as follows. This protein is involved in the repair of mismatches in DNA. It is required for dam-dependent methyl-directed DNA mismatch repair. May act as a 'molecular matchmaker', a protein that promotes the formation of a stable complex between two or more DNA-binding proteins in an ATP-dependent manner without itself being part of a final effector complex. This chain is DNA mismatch repair protein MutL, found in Baumannia cicadellinicola subsp. Homalodisca coagulata.